We begin with the raw amino-acid sequence, 347 residues long: GMP reductase (347 aa).

108–131 (ADFEKTVQILALNPALNFVCIDVA) provides a ligand contact to NADP(+). Residues Gly181 and Gly183 each coordinate K(+). The active-site Thioimidate intermediate is Cys186. 216-239 (IVSDGGCTMPGDVAKAFGGGADFV) provides a ligand contact to NADP(+).

It belongs to the IMPDH/GMPR family. GuaC type 1 subfamily. Homotetramer.

The enzyme catalyses IMP + NH4(+) + NADP(+) = GMP + NADPH + 2 H(+). Its function is as follows. Catalyzes the irreversible NADPH-dependent deamination of GMP to IMP. It functions in the conversion of nucleobase, nucleoside and nucleotide derivatives of G to A nucleotides, and in maintaining the intracellular balance of A and G nucleotides. The protein is GMP reductase of Salmonella paratyphi C (strain RKS4594).